The primary structure comprises 291 residues: Translocon-associated protein subunit alpha (291 aa).

The N-terminal stretch at 1–20 (MRLLPRLLLLLLLVFPATVL) is a signal peptide. Over 21 to 207 (FRGGPRGSLA…EREDGLDGET (187 aa)) the chain is Lumenal. Residues 34 to 83 (DLTEDEETVEDSIIEDEDDEAEVEEDEPTDLVEDKEEEDVSGEPEASPSA) form a disordered region. The span at 35–75 (LTEDEETVEDSIIEDEDDEAEVEEDEPTDLVEDKEEEDVSG) shows a compositional bias: acidic residues. N-linked (GlcNAc...) asparagine glycosylation is found at Asn136 and Asn191. Residues 208 to 228 (IFMYMFLAGLGLLVIVGLHQL) traverse the membrane as a helical segment. Residues 229–291 (LESRKRKRPV…AQKRSVGSDE (63 aa)) lie on the Cytoplasmic side of the membrane. Position 247 is a phosphoserine (Ser247). A Phosphothreonine modification is found at Thr260. Residues 263-291 (QIMQSRRDKASPRRLPRKRAQKRSVGSDE) are disordered. The residue at position 273 (Ser273) is a Phosphoserine. The segment covering 274 to 284 (PRRLPRKRAQK) has biased composition (basic residues).

The protein belongs to the TRAP-alpha family. In terms of assembly, heterotetramer of TRAP-alpha, TRAP-beta, TRAP-delta and TRAP-gamma. Interacts with palmitoylated calnexin (CALX), the interaction is required for efficient folding of glycosylated proteins. Phosphorylated in its cytoplasmic tail.

The protein resides in the endoplasmic reticulum membrane. Functionally, TRAP proteins are part of a complex whose function is to bind calcium to the ER membrane and thereby regulate the retention of ER resident proteins. May be involved in the recycling of the translocation apparatus after completion of the translocation process or may function as a membrane-bound chaperone facilitating folding of translocated proteins. This chain is Translocon-associated protein subunit alpha (SSR1), found in Pongo abelii (Sumatran orangutan).